Consider the following 242-residue polypeptide: MKLRRERFERRNGSGKNSQSSSSWMVTFTDLITLILVFFILLFSMSQIDLQKFKAAVDSIQKEGNGLQPDQTSIEKKNTSPSDTKKQEDQQDQLLKKVNTYIKDNHLKAQMTAKRDERGVVLVLQEAVLFDTGEAKVLKNAETLLHQIAVLLQTIPNDIQVEGHTDSRNISTYRYPSNWELSAARASGVIQYFTSKEKLPSKRFIAVGYADTKPVKDNKTNEHMKENRRVEIVIKKSKTTSS.

The segment covering 1 to 12 has biased composition (basic and acidic residues); it reads MKLRRERFERRN. The interval 1–21 is disordered; sequence MKLRRERFERRNGSGKNSQSS. Over 1 to 23 the chain is Cytoplasmic; the sequence is MKLRRERFERRNGSGKNSQSSSS. A helical transmembrane segment spans residues 24–44; the sequence is WMVTFTDLITLILVFFILLFS. Residues 45–242 are Extracellular-facing; it reads MSQIDLQKFK…VIKKSKTTSS (198 aa). The segment at 64 to 91 is disordered; the sequence is GNGLQPDQTSIEKKNTSPSDTKKQEDQQ. Positions 73–89 are enriched in basic and acidic residues; it reads SIEKKNTSPSDTKKQED. The OmpA-like domain maps to 117 to 238; it reads ERGVVLVLQE…RVEIVIKKSK (122 aa).

The protein belongs to the MotB family.

Its subcellular location is the cell membrane. May be involved in some transport function. This is an uncharacterized protein from Bacillus subtilis (strain 168).